Reading from the N-terminus, the 219-residue chain is 7-cyano-7-deazaguanine synthase (219 aa).

9 to 19 (YSGGMDSFTVL) provides a ligand contact to ATP. Residues C185, C193, C196, and C199 each coordinate Zn(2+).

Belongs to the QueC family. Requires Zn(2+) as cofactor.

The catalysed reaction is 7-carboxy-7-deazaguanine + NH4(+) + ATP = 7-cyano-7-deazaguanine + ADP + phosphate + H2O + H(+). Its pathway is purine metabolism; 7-cyano-7-deazaguanine biosynthesis. Functionally, catalyzes the ATP-dependent conversion of 7-carboxy-7-deazaguanine (CDG) to 7-cyano-7-deazaguanine (preQ(0)). This is 7-cyano-7-deazaguanine synthase from Marinomonas sp. (strain MWYL1).